We begin with the raw amino-acid sequence, 804 residues long: MNYNHKEIEKKWQNYWEENKTFKTNDNLGQKKFYALDMFPYPSGAGLHVGHPEGYTATDIISRYKRMQGYNVLHPMGWDAFGLPAEQYALDTGNDPREFTQKNIQTFKRQIQELGFSYDWDREVNTTDPEYYKWTQWIFIQLYNKGLAYVDEVAVNWCPALGTVLSNEEVVDGVSERGGHPVYRKPMKQWVLKITEYADRLLEDLDELDWPESIKDMQRNWIGRSEGAKVTFKIEQSDQNIEVFTTRPDTIYGTSFLVLSPEHPLVNEITTSDKEQEVKLYQNEASKKSDLERTDLAKEKTGVFTGTFAINPLSGDKLPIWIADYVLSTYGTGAVMAVPGHDERDHEFATKFNLPIIEVIEGGEVQKYAYTGEGKHINSGELDGLENEAAISKAIELLESKGAGEKKVNYKLRDWLFSRQRYWGEPIPIIHWEDGSMTTVPEDELPLLLPETDEIKPSGTGESPLANIDAFVNVIDEKTGMKGRRETNTMPQWAGSCWYYLRYIDPHNEKMIADPEKLKHWLPVDLYIGGVEHAVLHLLYARFWHKVLYDLGVVPTKEPFQKLYNQGMILGEGNEKMSKSKGNVINPDDIVASHGADTLRLYEMFMGPLDAAIAWSEKGLDGSRRFLDRVWRLIITDENSINKKIVDSNNHSLDKVYNQTVKKVTEDFDTLSFNTAISQLMVFINECYKTNEVYKPYIEGFVKMLSPIAPHIGEELWDRLGHENTITYQPWPTFDESLLVDDEVEIVVQVNGKVRAKINIPKDLSKEEMQDLALSNDNVKMSIEGKEVKKVIAVPQKLVNIVAK.

The 'HIGH' region motif lies at 40–51 (PYPSGAGLHVGH). The 'KMSKS' region motif lies at 576–580 (KMSKS). Lys579 serves as a coordination point for ATP.

Belongs to the class-I aminoacyl-tRNA synthetase family.

Its subcellular location is the cytoplasm. It carries out the reaction tRNA(Leu) + L-leucine + ATP = L-leucyl-tRNA(Leu) + AMP + diphosphate. This is Leucine--tRNA ligase from Staphylococcus epidermidis (strain ATCC 35984 / DSM 28319 / BCRC 17069 / CCUG 31568 / BM 3577 / RP62A).